We begin with the raw amino-acid sequence, 174 residues long: Glycine-rich protein 5 (174 aa).

The N-terminal stretch at 1 to 22 is a signal peptide; sequence MASKSLFLVALLVGSFAFTSFA.

Mostly expressed in immature seed pods, and, to a lower extent, in stems and leaves. Present in phloem and epiderm in leaves, stems, flowers and fruits.

It localises to the vacuole. In terms of biological role, involved in organ growth by promoting cell elongation processes. The protein is Glycine-rich protein 5 of Arabidopsis thaliana (Mouse-ear cress).